The following is a 635-amino-acid chain: Threonine--tRNA ligase (635 aa).

The region spanning 1–61 (MINISFPDGS…DNDCKLRILT (61 aa)) is the TGS domain. The interval 242 to 533 (DHRKLGRELD…LIEEYAGRFP (292 aa)) is catalytic. Zn(2+)-binding residues include cysteine 333, histidine 384, and histidine 510.

This sequence belongs to the class-II aminoacyl-tRNA synthetase family. Homodimer. Zn(2+) serves as cofactor.

The protein localises to the cytoplasm. The catalysed reaction is tRNA(Thr) + L-threonine + ATP = L-threonyl-tRNA(Thr) + AMP + diphosphate + H(+). Catalyzes the attachment of threonine to tRNA(Thr) in a two-step reaction: L-threonine is first activated by ATP to form Thr-AMP and then transferred to the acceptor end of tRNA(Thr). Also edits incorrectly charged L-seryl-tRNA(Thr). The polypeptide is Threonine--tRNA ligase (Rickettsia conorii (strain ATCC VR-613 / Malish 7)).